Here is a 274-residue protein sequence, read N- to C-terminus: 3-methyl-2-oxobutanoate hydroxymethyltransferase (274 aa).

Mg(2+) contacts are provided by aspartate 44 and aspartate 83. 3-methyl-2-oxobutanoate contacts are provided by residues 44 to 45 (DS), aspartate 83, and lysine 113. Glutamate 115 is a Mg(2+) binding site. The active-site Proton acceptor is the glutamate 182.

Belongs to the PanB family. As to quaternary structure, homodecamer; pentamer of dimers. Mg(2+) is required as a cofactor.

Its subcellular location is the cytoplasm. It carries out the reaction 3-methyl-2-oxobutanoate + (6R)-5,10-methylene-5,6,7,8-tetrahydrofolate + H2O = 2-dehydropantoate + (6S)-5,6,7,8-tetrahydrofolate. The protein operates within cofactor biosynthesis; (R)-pantothenate biosynthesis; (R)-pantoate from 3-methyl-2-oxobutanoate: step 1/2. In terms of biological role, catalyzes the reversible reaction in which hydroxymethyl group from 5,10-methylenetetrahydrofolate is transferred onto alpha-ketoisovalerate to form ketopantoate. In Campylobacter jejuni subsp. doylei (strain ATCC BAA-1458 / RM4099 / 269.97), this protein is 3-methyl-2-oxobutanoate hydroxymethyltransferase.